The chain runs to 971 residues: E3 ubiquitin-protein ligase MIB2 (971 aa).

Positions 1-80 (MDLDPHAGVQ…AHDLLLYDNA (80 aa)) constitute an MIB/HERC2 1 domain. Residues 86–138 (HPNIICDCCKKHGLRGMRWKCRVCFDYDLCTQCYMHNKHDLTHAFERYETSHS) form a ZZ-type zinc finger. Residues Cys91, Cys94, Cys106, Cys109, Cys115, Cys118, His124, and His128 each contribute to the Zn(2+) site. Residues 149 to 227 (LPRIPLRGIF…KVDLKCVGEA (79 aa)) form the MIB/HERC2 2 domain. Phosphoserine is present on Ser251. ANK repeat units follow at residues 478–507 (QGRT…SVDL), 511–540 (EGNT…GVDA), 544–573 (TRST…DVNL), 577–609 (HADT…DVTA), 613–642 (QGFT…QLVD), 647–677 (DGFT…DVNV), 681–710 (KLQS…NVNT), 714–742 (EGDT…DPGP), and 783–812 (RGRS…ERQA). 2 consecutive RING-type zinc fingers follow at residues 848–883 (CLVC…IRCQ) and 927–960 (CPIC…PICR).

As to quaternary structure, interacts with actin monomer. Post-translationally, ubiquitinated. Possibly via autoubiquitination.

The protein localises to the cytoplasm. The protein resides in the endosome. The enzyme catalyses S-ubiquitinyl-[E2 ubiquitin-conjugating enzyme]-L-cysteine + [acceptor protein]-L-lysine = [E2 ubiquitin-conjugating enzyme]-L-cysteine + N(6)-ubiquitinyl-[acceptor protein]-L-lysine.. It functions in the pathway protein modification; protein ubiquitination. Its function is as follows. E3 ubiquitin-protein ligase that mediates ubiquitination of Delta receptors, which act as ligands of Notch proteins. Positively regulates the Delta-mediated Notch signaling by ubiquitinating the intracellular domain of Delta, leading to endocytosis of Delta receptors. This is E3 ubiquitin-protein ligase MIB2 (Mib2) from Rattus norvegicus (Rat).